We begin with the raw amino-acid sequence, 232 residues long: Small ribosomal subunit protein uS3 (232 aa).

The KH type-2 domain occupies 39 to 107 (IRAFLKKKLY…EVNVNIKEER (69 aa)). A disordered region spans residues 212–232 (VQPEKTEDDAPKKTRRPRRGK). A compositionally biased stretch (basic and acidic residues) spans 213-223 (QPEKTEDDAPK).

This sequence belongs to the universal ribosomal protein uS3 family. In terms of assembly, part of the 30S ribosomal subunit. Forms a tight complex with proteins S10 and S14.

Binds the lower part of the 30S subunit head. Binds mRNA in the 70S ribosome, positioning it for translation. This chain is Small ribosomal subunit protein uS3, found in Campylobacter curvus (strain 525.92).